Consider the following 267-residue polypeptide: HTH-type transcriptional activator CsvR (267 aa).

DNA-binding regions (H-T-H motif) lie at residues 183-204 and 230-253; these read AIIA…ESED and ISQI…NKHF.

As to quaternary structure, homodimer.

Transcriptional activator of fimbrial genes in enterotoxigenic E.coli. This is HTH-type transcriptional activator CsvR from Escherichia coli.